The following is a 302-amino-acid chain: Nitrophorin Cim l NP (302 aa).

The signal sequence occupies residues M1–A20. C80 provides a ligand contact to heme.

The cofactor is heme b. The N-terminus is blocked. Expressed in salivary glands.

It localises to the secreted. Functionally, heme-based protein that delivers nitric oxide gas (NO) to the victim while feeding, resulting in vasodilation. In place of heme, the heme-binding cysteine can also reversibly bind NO when it is present in high concentrations. The chain is Nitrophorin Cim l NP from Cimex lectularius (Bed bug).